The primary structure comprises 79 residues: Dermaseptin-S8 (79 aa).

An N-terminal signal peptide occupies residues 1 to 22; sequence MDILKKSLFLVLFLGLVSLSIC. The propeptide occupies 23–45; that stretch reads EEEKRENEDEEKQEDDEQSEMKR. Residue Gln76 is modified to Glutamine amide. Positions 78 to 79 are excised as a propeptide; sequence AQ.

It belongs to the frog skin active peptide (FSAP) family. Dermaseptin subfamily. Expressed by the skin glands.

Its subcellular location is the secreted. In terms of biological role, potent antimicrobial peptide with activity against bacteria, fungi and protozoa. Probably acts by disturbing membrane functions with its amphipathic structure. The chain is Dermaseptin-S8 from Phyllomedusa sauvagei (Sauvage's leaf frog).